The primary structure comprises 90 residues: Putative beta-neurotoxin RjAa14F (90 aa).

The first 18 residues, 1–18 (MKILIFIIASFMLIGVEC), serve as a signal peptide directing secretion. The LCN-type CS-alpha/beta domain occupies 19–89 (KEGYPTNSEG…VWDPNNNKCV (71 aa)). Cystine bridges form between Cys29–Cys88, Cys33–Cys62, Cys40–Cys69, and Cys44–Cys71.

The protein belongs to the long (4 C-C) scorpion toxin superfamily. Sodium channel inhibitor family. Beta subfamily. In terms of tissue distribution, expressed by the venom gland.

Its subcellular location is the secreted. Beta toxins bind voltage-independently at site-4 of sodium channels (Nav) and shift the voltage of activation toward more negative potentials thereby affecting sodium channel activation and promoting spontaneous and repetitive firing. The protein is Putative beta-neurotoxin RjAa14F of Rhopalurus junceus (Caribbean blue scorpion).